Reading from the N-terminus, the 460-residue chain is Nitrilase and fragile histidine triad fusion protein NitFhit (460 aa).

Positions 33 to 279 (ATIAVGQMRS…LDIGTAEVDL (247 aa)) constitute a CN hydrolase domain. Catalysis depends on residues Glu72, Lys142, and Cys183. Residues 315–422 (DRPFATNIVD…MPRRLGDFGH (108 aa)) form the HIT domain. Positions 407–411 (HVHFH) match the Histidine triad motif motif. Residue His409 is the Tele-AMP-histidine intermediate of the active site.

This sequence in the N-terminal section; belongs to the UPF0012 family. Homotetramer. It depends on Mn(2+) as a cofactor.

It carries out the reaction P(1),P(3)-bis(5'-adenosyl) triphosphate + H2O = AMP + ADP + 2 H(+). Cleaves A-5'-PPP-5'A to yield AMP and ADP. This chain is Nitrilase and fragile histidine triad fusion protein NitFhit, found in Drosophila melanogaster (Fruit fly).